We begin with the raw amino-acid sequence, 346 residues long: Peripherin-2 (346 aa).

The Cytoplasmic segment spans residues 1–18 (MALLKVKFDQKKRVKLAQ). The helical transmembrane segment at 19–41 (GLWLMNWFSVLAGIIIFGLGLFL) threads the bilayer. The Lumenal segment spans residues 42 to 62 (KIELRKRSDVMNNSESHFVPN). Residue asparagine 53 is glycosylated (N-linked (GlcNAc...) asparagine). The chain crosses the membrane as a helical span at residues 63-79 (SLIGVGVLSCVFNSLAG). At 80–101 (KICYDALDPAKYAKWKPWLKPY) the chain is on the cytoplasmic side. The chain crosses the membrane as a helical span at residues 102 to 122 (LAVCVLFNVVLFLVALCCFLL). The Lumenal portion of the chain corresponds to 123–264 (RGSLESTLAH…LSYYSNLMNT (142 aa)). N-linked (GlcNAc...) asparagine glycosylation is found at asparagine 229 and asparagine 263. The chain crosses the membrane as a helical span at residues 265-283 (TGAVTLLVWLFEVTITVGL). Residues 284-346 (RYLHTALEGM…EDAGQAPAAG (63 aa)) are Cytoplasmic-facing. Residues 341–346 (QAPAAG) are interaction with MREG.

It belongs to the PRPH2/ROM1 family. In terms of assembly, homodimer; disulfide-linked. Forms a homotetramer. Forms a heterotetramer with ROM1. Homotetramer and heterotetramer core complexes go on to form higher order complexes by formation of intermolecular disulfide bonds. Interacts with MREG. Interacts with STX3. Interacts with SNAP25. Retina (photoreceptor). In rim region of ROS (rod outer segment) disks.

The protein resides in the membrane. It is found in the cell projection. Its subcellular location is the cilium. The protein localises to the photoreceptor outer segment. It localises to the photoreceptor inner segment. In terms of biological role, essential for retina photoreceptor outer segment disk morphogenesis, may also play a role with ROM1 in the maintenance of outer segment disk structure. Required for the maintenance of retinal outer nuclear layer thickness. Required for the correct development and organization of the photoreceptor inner segment. This is Peripherin-2 (PRPH2) from Bos taurus (Bovine).